The chain runs to 416 residues: CinA-like protein (416 aa).

This sequence belongs to the CinA family.

The protein is CinA-like protein of Solibacter usitatus (strain Ellin6076).